Here is a 431-residue protein sequence, read N- to C-terminus: SPI-1 type 3 secretion system ATPase (431 aa).

An ATP-binding site is contributed by 162–167 (GCGKTM).

This sequence belongs to the ATPase alpha/beta chains family. T3SS ATPase subfamily. As to quaternary structure, the core secretion machinery of the T3SS is composed of approximately 20 different proteins, including cytoplasmic components, a base, an export apparatus and a needle. This subunit is part of the cytosolic complex. Forms homohexamers.

It is found in the cytoplasm. It carries out the reaction ATP + H2O + cellular proteinSide 1 = ADP + phosphate + cellular proteinSide 2.. In terms of biological role, ATPase component of the type III secretion system (T3SS), also called injectisome, which is used to inject bacterial effector proteins into eukaryotic host cells. Acts as a molecular motor to provide the energy that is required for the export of proteins. Required for type III secretion apparatus (T3SA) formation, proper protein secretion, host cell invasion and virulence. May play a critical role in T3SS substrate recognition, disassembly of the effector/chaperone complex and unfolding of the effector in an ATP-dependent manner prior to secretion. In Salmonella typhi, this protein is SPI-1 type 3 secretion system ATPase.